The sequence spans 225 residues: Jeltraxin (225 aa).

An N-terminal signal peptide occupies residues 1-19 (MKGLVIFFCLFYGCHVAGA). A Pentraxin (PTX) domain is found at 21 to 223 (GKTIMLFPQK…IVVLRNQFIP (203 aa)). Cys51 and Cys112 are disulfide-bonded. Positions 75 and 76 each coordinate Ca(2+). Residue Asn87 is glycosylated (N-linked (GlcNAc...) asparagine). Ca(2+) is bound by residues Glu153, Gln154, Asp155, and Gln165. A glycan (N-linked (GlcNAc...) asparagine) is linked at Asn207.

In terms of assembly, homodecamer consisting of two homopentamer units. Pentraxin (or pentaxin) have a discoid arrangement of 5 non-covalently bound subunits. Ca(2+) is required as a cofactor. Post-translationally, glycosylated. Oviduct. Highest expression levels were detected in the pars convoluta with lower levels detected in the pars recta. No expression was detected in the pars uterina.

It localises to the secreted. Calcium-dependent beta-galactose specific lectin. In Lepidobatrachus laevis (Budgett's frog), this protein is Jeltraxin.